A 118-amino-acid polypeptide reads, in one-letter code: 5-hydroxyisourate hydrolase (118 aa).

Substrate is bound by residues His7, Arg46, and Tyr115.

Belongs to the transthyretin family. 5-hydroxyisourate hydrolase subfamily. Homotetramer.

The catalysed reaction is 5-hydroxyisourate + H2O = 5-hydroxy-2-oxo-4-ureido-2,5-dihydro-1H-imidazole-5-carboxylate + H(+). Catalyzes the hydrolysis of 5-hydroxyisourate (HIU) to 2-oxo-4-hydroxy-4-carboxy-5-ureidoimidazoline (OHCU). The protein is 5-hydroxyisourate hydrolase of Brucella suis biovar 1 (strain 1330).